Consider the following 245-residue polypeptide: MLVIPAIDLKDGVCVRLEQGLMDRDTVFNDNPASQALEWQNQGAELLHIVDLDGAFAGTPRNKAAIEAIVKAISIPAQLGGGIRDLATIESYLSLGLSRVIIGTAAQRNPQLVKEACAKFPGRIVVGIDAKAGMVAVQGWAEVTGITAVDLARKFEDCGVAAIIYTDISRDGMLQGPNIEATRSLAEAVAIPVIASGGVSTLKDIENLMTIERSGVTGVITGKAIYTGAIRLHEAIALTGKDNQE.

Asp-8 (proton acceptor) is an active-site residue. The Proton donor role is filled by Asp-129.

It belongs to the HisA/HisF family.

The protein localises to the cytoplasm. It carries out the reaction 1-(5-phospho-beta-D-ribosyl)-5-[(5-phospho-beta-D-ribosylamino)methylideneamino]imidazole-4-carboxamide = 5-[(5-phospho-1-deoxy-D-ribulos-1-ylimino)methylamino]-1-(5-phospho-beta-D-ribosyl)imidazole-4-carboxamide. It functions in the pathway amino-acid biosynthesis; L-histidine biosynthesis; L-histidine from 5-phospho-alpha-D-ribose 1-diphosphate: step 4/9. In Pelobacter propionicus (strain DSM 2379 / NBRC 103807 / OttBd1), this protein is 1-(5-phosphoribosyl)-5-[(5-phosphoribosylamino)methylideneamino] imidazole-4-carboxamide isomerase.